The chain runs to 376 residues: Chaperone protein DnaJ (376 aa).

One can recognise a J domain in the interval 5-70 (DYYEVLGVAK…QKRAAYDQYG (66 aa)). Residues 136–214 (GYDTQIRVPS…CHGSGKVKET (79 aa)) form a CR-type zinc finger. Positions 149, 152, 166, 169, 188, 191, 202, and 205 each coordinate Zn(2+). 4 CXXCXGXG motif repeats span residues 149 to 156 (CGVCHGSG), 166 to 173 (CPTCHGQG), 188 to 195 (CPKCHGTG), and 202 to 209 (CAHCHGSG).

Belongs to the DnaJ family. As to quaternary structure, homodimer. The cofactor is Zn(2+).

It is found in the cytoplasm. Participates actively in the response to hyperosmotic and heat shock by preventing the aggregation of stress-denatured proteins and by disaggregating proteins, also in an autonomous, DnaK-independent fashion. Unfolded proteins bind initially to DnaJ; upon interaction with the DnaJ-bound protein, DnaK hydrolyzes its bound ATP, resulting in the formation of a stable complex. GrpE releases ADP from DnaK; ATP binding to DnaK triggers the release of the substrate protein, thus completing the reaction cycle. Several rounds of ATP-dependent interactions between DnaJ, DnaK and GrpE are required for fully efficient folding. Also involved, together with DnaK and GrpE, in the DNA replication of plasmids through activation of initiation proteins. This chain is Chaperone protein DnaJ, found in Burkholderia mallei (strain NCTC 10229).